The sequence spans 186 residues: Photosystem I assembly protein Ycf4 (186 aa).

2 helical membrane-spanning segments follow: residues 26-46 and 66-86; these read WATIIFIGALGFLLAGLSSYF and IVMTFYGSIGVFLSLFLWLTI.

This sequence belongs to the Ycf4 family.

It is found in the plastid. The protein localises to the chloroplast thylakoid membrane. Its function is as follows. Seems to be required for the assembly of the photosystem I complex. In Pyropia yezoensis (Susabi-nori), this protein is Photosystem I assembly protein Ycf4.